Here is a 542-residue protein sequence, read N- to C-terminus: MQAKIIYALSAISALIPLGSSLLAPIEDPIVSNKYLISYIDEDDWSDRILQNQSVMNSGYIVNMGDDLECFIQNASTQLNDVLEDSNEHSNSEKTALLTKTLNQGVKTIFDKLNERCIFYQAGFWIYEYCPGIEFVQFHGRVNTKTGEIVNRDESLVYRLGKPKANVEEREFELLYDDVGYYISEIIGSGDICDVTGAERMVEIQYVCGGSNSGPSTIQWVRETKICVYEAQVTIPELCNLELLAKNEDQKNASPILCRMPAKSKIGSNSIDLITKYEPIFLGSGIYFLRPFNTDERDKLMVTDNAMSNWDEITETYYQKFGNAINKMLSLRLVSLPNGHILQPGDSCVWLAEVVDMKDRFQTTLSLNILNSQRAEIFFNKTFTFNEDNGNFLSYKIGDHGESTELGQITHSNKADINTAEIRSDEYLINTDNELFLRISKEIAEVKELLNEIVSPHEMEVIFENMRNQPNNDFELALMNKLKSSLNDDNKVEQINNARMDDDESTSHTTRDIGEAGSQTTGNTESEVTNVAAGVFIEHDEL.

A signal peptide spans 1–21 (MQAKIIYALSAISALIPLGSS). N-linked (GlcNAc...) asparagine glycans are attached at residues asparagine 52 and asparagine 74. 4 disulfide bridges follow: cysteine 70–cysteine 258, cysteine 117–cysteine 130, cysteine 193–cysteine 227, and cysteine 208–cysteine 239. Residues 115–241 (ERCIFYQAGF…QVTIPELCNL (127 aa)) enclose the MRH domain. A mannooligosaccharide derivative contacts are provided by tryptophan 125, glutamine 137, aspartate 194, arginine 200, glutamate 223, and tyrosine 229. A glycan (N-linked (GlcNAc...) asparagine) is linked at asparagine 380. Residues 497 to 528 (NARMDDDESTSHTTRDIGEAGSQTTGNTESEV) form a disordered region. Positions 505–514 (STSHTTRDIG) are enriched in basic and acidic residues. Positions 517 to 528 (GSQTTGNTESEV) are enriched in polar residues. The Prevents secretion from ER signature appears at 539 to 542 (HDEL).

This sequence belongs to the OS-9 family. In terms of assembly, homodimer. Component of the HRD1 ubiquitin ligase complex which contains the E3 ligase HRD1, its cofactors HRD3, USA1 and DER1, substrate recruiting factor YOS9 and CDC48-binding protein UBX2. Within the complex, interacts (via N-terminus) with HRD3. In ERAD-L, HRD3 and YOS9 jointly bind misfolded glycoproteins in the endoplasmic reticulum (ER) lumen. Movement of ERAD-L substrates through the ER membrane is facilitated by HRD1 and DER1 which have lateral gates facing each other and which distort the membrane region between the lateral gates, making it much thinner than a normal phospholipid bilayer. Substrates insert into the membrane as a hairpin loop with one strand interacting with DER1 and the other with HRD1. The HRD1 complex interacts with the heterotrimeric CDC48-NPL4-UFD1 ATPase complex which is recruited by UBX2 via its interaction with CDC48 and which moves ubiquitinated substrates to the cytosol for targeting to the proteasome. Interacts with KAR2 and EMP47. Interacts with misfolded ER lumenal proteins like PCR1. Interacts with the GPI-anchored proteins GAS1 and MKC7.

Its subcellular location is the endoplasmic reticulum membrane. In terms of biological role, lectin involved in the quality control of the secretory pathway. As a member of the endoplasmic reticulum-associated degradation lumenal (ERAD-L) surveillance system, targets misfolded endoplasmic reticulum lumenal glycoproteins for degradation. The recognition of targets is N-glycan specific. Functions in recruiting misfolded protein substrates in conjunction with HRD3. The protein is Protein OS-9 homolog (YOS9) of Saccharomyces cerevisiae (strain ATCC 204508 / S288c) (Baker's yeast).